Consider the following 138-residue polypeptide: Putative pre-16S rRNA nuclease (138 aa).

Belongs to the YqgF nuclease family.

The protein localises to the cytoplasm. Its function is as follows. Could be a nuclease involved in processing of the 5'-end of pre-16S rRNA. This Azobacteroides pseudotrichonymphae genomovar. CFP2 protein is Putative pre-16S rRNA nuclease.